The primary structure comprises 413 residues: Peptidase T (413 aa).

Residue His82 participates in Zn(2+) binding. Residue Asp84 is part of the active site. Zn(2+) is bound at residue Asp145. Residue Glu179 is the Proton acceptor of the active site. Zn(2+) is bound by residues Glu180, Asp202, and His384.

This sequence belongs to the peptidase M20B family. It depends on Zn(2+) as a cofactor.

The protein localises to the cytoplasm. It catalyses the reaction Release of the N-terminal residue from a tripeptide.. Cleaves the N-terminal amino acid of tripeptides. This Latilactobacillus sakei subsp. sakei (strain 23K) (Lactobacillus sakei subsp. sakei) protein is Peptidase T.